A 320-amino-acid chain; its full sequence is Protein rlx (320 aa).

Functionally, this protein is probably required for relaxation complex formation and plasmid mobilization by conjugative plasmids. This is Protein rlx (rlx) from Staphylococcus aureus.